A 238-amino-acid polypeptide reads, in one-letter code: MTDEEKNLIENLFHRLKKTELNSPERDDAADELIQRLAKKQPTSSYYMAQTILIQETAIKKMSIELEELRKKIKILNREETNKKPSFLSNFFKKKSPSEIISNDNNILKKKENILPSNYSSSPISPTTQTSPVINNTRSSSFLGNALQTATGVAGGMILGNMLMNVFSHTKPEEDIFDTVKQSSSDEYTENNFLNNNTDNDLINYSYNESDINFRESSEESINNNVDDTDDIDNDNFI.

Residues 219-238 (EESINNNVDDTDDIDNDNFI) form a disordered region. Residues 227 to 238 (DDTDDIDNDNFI) are compositionally biased toward acidic residues.

This is an uncharacterized protein from Buchnera aphidicola subsp. Acyrthosiphon pisum (strain APS) (Acyrthosiphon pisum symbiotic bacterium).